A 727-amino-acid chain; its full sequence is Probable copper-importing P-type ATPase A (727 aa).

Topologically, residues 1-94 (MATNTKMETF…QTYLRKMKFD (94 aa)) are cytoplasmic. The HMA domain maps to 6–70 (KMETFVITGM…SVENIGYGAI (65 aa)). Residues Cys-17 and Cys-20 each contribute to the Cu(+) site. The helical transmembrane segment at 95-115 (LIFSAILTLPLMLAMIAMMLG) threads the bilayer. Residues 116–119 (SHGP) are Extracellular-facing. The helical transmembrane segment at 120 to 137 (IVSFFHLSLVQLLFALPV) threads the bilayer. At 138–161 (QFYVGWRFYKGAYHALKTKAPNMD) the chain is on the cytoplasmic side. The chain crosses the membrane as a helical span at residues 162–181 (VLVAIGTSAAFALSIYNGFF). Residues 182-187 (PSHSHD) are Extracellular-facing. Residues 188–203 (LYFESSSMIITLILLG) traverse the membrane as a helical segment. The Cytoplasmic portion of the chain corresponds to 204-341 (KYLEHTAKSK…PIQQIADKIS (138 aa)). The helical transmembrane segment at 342–362 (GIFVPIVLFLALVTLLVTGWL) threads the bilayer. Over 363–375 (TKDWQLALLHSVS) the chain is Extracellular. The chain crosses the membrane as a helical span at residues 376–396 (VLVIACPCALGLATPTAIMVG). The Cytoplasmic segment spans residues 397–678 (TGVGAHNGIL…AATLKKIKQN (282 aa)). Asp-425 functions as the 4-aspartylphosphate intermediate in the catalytic mechanism. Residues Asp-621 and Asp-625 each contribute to the Mg(2+) site. A helical membrane pass occupies residues 679-698 (LFWAFIYNTIGIPFAAFGFL). Over 699 to 700 (NP) the chain is Extracellular. Residues 701–721 (IIAGGAMAFSSISVLLNSLSL) form a helical membrane-spanning segment. Residues 722-727 (NRKTIK) lie on the Cytoplasmic side of the membrane.

It belongs to the cation transport ATPase (P-type) (TC 3.A.3) family. Type IB subfamily. In terms of assembly, monomer. Interacts with the copper chaperone CopZ.

Its subcellular location is the cell membrane. It carries out the reaction Cu(+)(in) + ATP + H2O = Cu(+)(out) + ADP + phosphate + H(+). With respect to regulation, inhibited by vanadate. In terms of biological role, probably involved in copper import under copper limiting conditions. The chain is Probable copper-importing P-type ATPase A (copA) from Enterococcus hirae (strain ATCC 9790 / DSM 20160 / JCM 8729 / LMG 6399 / NBRC 3181 / NCIMB 6459 / NCDO 1258 / NCTC 12367 / WDCM 00089 / R).